A 506-amino-acid chain; its full sequence is Cytochrome P450 4B1 (506 aa).

Residue Glu-310 participates in heme binding. Ser-431 is modified (phosphoserine). Residue Cys-448 participates in heme binding.

Belongs to the cytochrome P450 family. Heme serves as cofactor.

The protein resides in the endoplasmic reticulum membrane. Its subcellular location is the microsome membrane. It catalyses the reaction an organic molecule + reduced [NADPH--hemoprotein reductase] + O2 = an alcohol + oxidized [NADPH--hemoprotein reductase] + H2O + H(+). Cytochromes P450 are a group of heme-thiolate monooxygenases. In liver microsomes, this enzyme is involved in an NADPH-dependent electron transport pathway. It oxidizes a variety of structurally unrelated compounds, including steroids, fatty acids, and xenobiotics. This is Cytochrome P450 4B1 (CYP4B1) from Oryctolagus cuniculus (Rabbit).